A 238-amino-acid chain; its full sequence is Ribonuclease 3 (238 aa).

In terms of domain architecture, RNase III spans 4–127 (IEEFEKRLGY…TMGAIYLETG (124 aa)). Mg(2+) is bound at residue Glu-40. The active site involves Asp-44. Positions 113 and 116 each coordinate Mg(2+). Glu-116 is a catalytic residue. Positions 154–223 (DYKTALQELT…ARIALEIFHR (70 aa)) constitute a DRBM domain.

This sequence belongs to the ribonuclease III family. Homodimer. Mg(2+) is required as a cofactor.

It is found in the cytoplasm. The catalysed reaction is Endonucleolytic cleavage to 5'-phosphomonoester.. Functionally, digests double-stranded RNA. Involved in the processing of primary rRNA transcript to yield the immediate precursors to the large and small rRNAs (23S and 16S). Processes some mRNAs, and tRNAs when they are encoded in the rRNA operon. Processes pre-crRNA and tracrRNA of type II CRISPR loci if present in the organism. The protein is Ribonuclease 3 of Wolinella succinogenes (strain ATCC 29543 / DSM 1740 / CCUG 13145 / JCM 31913 / LMG 7466 / NCTC 11488 / FDC 602W) (Vibrio succinogenes).